The chain runs to 142 residues: Large ribosomal subunit protein uL13 (142 aa).

The protein belongs to the universal ribosomal protein uL13 family. In terms of assembly, part of the 50S ribosomal subunit.

Its function is as follows. This protein is one of the early assembly proteins of the 50S ribosomal subunit, although it is not seen to bind rRNA by itself. It is important during the early stages of 50S assembly. The sequence is that of Large ribosomal subunit protein uL13 from Aliivibrio salmonicida (strain LFI1238) (Vibrio salmonicida (strain LFI1238)).